The primary structure comprises 117 residues: Non-specific lipid-transfer protein (117 aa).

An N-terminal signal peptide occupies residues 1-26 (MACSAMTKLALVVALCMVVSVPIAQA). Disulfide bonds link cysteine 29–cysteine 76, cysteine 39–cysteine 53, cysteine 54–cysteine 99, and cysteine 74–cysteine 113.

Belongs to the plant LTP family.

Functionally, plant non-specific lipid-transfer proteins transfer phospholipids as well as galactolipids across membranes. May play a role in wax or cutin deposition in the cell walls of expanding epidermal cells and certain secretory tissues. The sequence is that of Non-specific lipid-transfer protein from Prunus avium (Cherry).